We begin with the raw amino-acid sequence, 686 residues long: DNA ligase (686 aa).

NAD(+) is bound by residues 33–37 (DSVYD), 82–83 (SL), and Glu-122. The active-site N6-AMP-lysine intermediate is the Lys-124. NAD(+)-binding residues include Arg-145, Glu-182, Lys-300, and Lys-324. Positions 418, 421, 436, and 441 each coordinate Zn(2+). Residues 600–686 (AVSQILAGKK…PTVESGDLHP (87 aa)) enclose the BRCT domain.

It belongs to the NAD-dependent DNA ligase family. LigA subfamily. Mg(2+) serves as cofactor. Requires Mn(2+) as cofactor.

The enzyme catalyses NAD(+) + (deoxyribonucleotide)n-3'-hydroxyl + 5'-phospho-(deoxyribonucleotide)m = (deoxyribonucleotide)n+m + AMP + beta-nicotinamide D-nucleotide.. Functionally, DNA ligase that catalyzes the formation of phosphodiester linkages between 5'-phosphoryl and 3'-hydroxyl groups in double-stranded DNA using NAD as a coenzyme and as the energy source for the reaction. It is essential for DNA replication and repair of damaged DNA. This chain is DNA ligase, found in Synechococcus sp. (strain JA-2-3B'a(2-13)) (Cyanobacteria bacterium Yellowstone B-Prime).